The primary structure comprises 229 residues: Potassium/proton antiporter CemA (229 aa).

3 helical membrane-spanning segments follow: residues 7-27, 107-127, and 189-209; these read FTPL…SLSF, ILHF…SLLG, and IISG…KYWI.

It belongs to the CemA family.

Its subcellular location is the plastid. The protein localises to the chloroplast inner membrane. The catalysed reaction is K(+)(in) + H(+)(out) = K(+)(out) + H(+)(in). In terms of biological role, contributes to K(+)/H(+) antiport activity by supporting proton efflux to control proton extrusion and homeostasis in chloroplasts in a light-dependent manner to modulate photosynthesis. Prevents excessive induction of non-photochemical quenching (NPQ) under continuous-light conditions. Indirectly promotes efficient inorganic carbon uptake into chloroplasts. The protein is Potassium/proton antiporter CemA of Lactuca sativa (Garden lettuce).